We begin with the raw amino-acid sequence, 556 residues long: Undecaprenyl phosphate-alpha-4-amino-4-deoxy-L-arabinose arabinosyl transferase (556 aa).

Helical transmembrane passes span 5–25, 88–108, 116–136, 179–199, 207–227, 258–278, 296–316, 319–339, 355–375, 384–404, and 410–430; these read MIKL…LLPL, FASV…ALLL, LLAA…TYSV, FMTK…PVAL, LLLF…PWAL, APFW…LALL, FLLL…KGKL, YILP…SGLA, LAFG…IIMP, LTIV…AVSL, and WGYL…GSIP.

It belongs to the glycosyltransferase 83 family.

Its subcellular location is the cell inner membrane. The enzyme catalyses 4-amino-4-deoxy-alpha-L-arabinopyranosyl di-trans,octa-cis-undecaprenyl phosphate + lipid IVA = lipid IIA + di-trans,octa-cis-undecaprenyl phosphate.. The protein operates within lipopolysaccharide metabolism; 4-amino-4-deoxy-beta-L-arabinose-lipid A biosynthesis. Catalyzes the transfer of the L-Ara4N moiety of the glycolipid undecaprenyl phosphate-alpha-L-Ara4N to lipid A. The modified arabinose is attached to lipid A and is required for resistance to polymyxin and cationic antimicrobial peptides. The protein is Undecaprenyl phosphate-alpha-4-amino-4-deoxy-L-arabinose arabinosyl transferase of Pectobacterium carotovorum subsp. carotovorum (strain PC1).